Reading from the N-terminus, the 176-residue chain is NAD(P)H-quinone oxidoreductase subunit 6, chloroplastic (176 aa).

5 consecutive transmembrane segments (helical) span residues 10-30 (ILLV…VLFT), 32-52 (PIYS…FYIP), 61-81 (AQLL…VMFM), 90-112 (FHLW…FSLI), and 152-172 (FYLP…GAIA).

The protein belongs to the complex I subunit 6 family. As to quaternary structure, NDH is composed of at least 16 different subunits, 5 of which are encoded in the nucleus.

Its subcellular location is the plastid. The protein localises to the chloroplast thylakoid membrane. It carries out the reaction a plastoquinone + NADH + (n+1) H(+)(in) = a plastoquinol + NAD(+) + n H(+)(out). The catalysed reaction is a plastoquinone + NADPH + (n+1) H(+)(in) = a plastoquinol + NADP(+) + n H(+)(out). Its function is as follows. NDH shuttles electrons from NAD(P)H:plastoquinone, via FMN and iron-sulfur (Fe-S) centers, to quinones in the photosynthetic chain and possibly in a chloroplast respiratory chain. The immediate electron acceptor for the enzyme in this species is believed to be plastoquinone. Couples the redox reaction to proton translocation, and thus conserves the redox energy in a proton gradient. This is NAD(P)H-quinone oxidoreductase subunit 6, chloroplastic (ndhG) from Ceratophyllum demersum (Rigid hornwort).